A 267-amino-acid chain; its full sequence is Tryptophan synthase alpha chain (267 aa).

Active-site proton acceptor residues include glutamate 49 and aspartate 60.

Belongs to the TrpA family. As to quaternary structure, tetramer of two alpha and two beta chains.

The catalysed reaction is (1S,2R)-1-C-(indol-3-yl)glycerol 3-phosphate + L-serine = D-glyceraldehyde 3-phosphate + L-tryptophan + H2O. It functions in the pathway amino-acid biosynthesis; L-tryptophan biosynthesis; L-tryptophan from chorismate: step 5/5. Its function is as follows. The alpha subunit is responsible for the aldol cleavage of indoleglycerol phosphate to indole and glyceraldehyde 3-phosphate. The polypeptide is Tryptophan synthase alpha chain (Carboxydothermus hydrogenoformans (strain ATCC BAA-161 / DSM 6008 / Z-2901)).